A 1024-amino-acid chain; its full sequence is Beta-galactosidase (1024 aa).

Substrate-binding residues include Asn-103 and Asp-202. Asp-202 contacts Na(+). Mg(2+) contacts are provided by Glu-417, His-419, and Glu-462. Substrate contacts are provided by residues Glu-462 and 538–541 (EYAH). The Proton donor role is filled by Glu-462. Glu-538 (nucleophile) is an active-site residue. Asn-598 lines the Mg(2+) pocket. Na(+)-binding residues include Phe-602 and Asn-605. The substrate site is built by Asn-605 and Trp-1000.

The protein belongs to the glycosyl hydrolase 2 family. As to quaternary structure, homotetramer. Mg(2+) is required as a cofactor. It depends on Na(+) as a cofactor.

It catalyses the reaction Hydrolysis of terminal non-reducing beta-D-galactose residues in beta-D-galactosides.. This is Beta-galactosidase from Escherichia coli O127:H6 (strain E2348/69 / EPEC).